A 434-amino-acid chain; its full sequence is MITVFVACLFQCVSSLPAKLYIKTTLAEGIGKLQTVIGIDNDIVFAYERLYGDLTLRNHTAVGETLFDLAGSLEEGKNSTVDRFLGHVVIREFHRLHAGLQYVSVQNFSVSELVCFVNNNTQLSGSYVFLARNTTYVQIDLFNENRSFVHDLINVSSFLQNRSLHVLSFYARRFCVEDILNFYGKVVFGDSKYRPPQVFSKRDTGLLVCTARRYRPIGTNIQWSLHNQTVSDDHTTDDFIRTEISGQLLYSYERALSRALSMTHREFSCEITHKLLVTPALLTREDAFSFKGFVNPVKESEDTFPRHNFPAPHRKKFNKLQLLWIFIVIPIAAGCMFLYILTRYIQFFVSGGSSSNPNRVLKRRRGNDEVPMVIMEVEYCNYEAENHDMELHSVQNVRDDSIAVVCGNNSFDIERQSIKSHESFSNVKLEMLPL.

The first 15 residues, M1–S15, serve as a signal peptide directing secretion. Residues L322–T342 form a helical membrane-spanning segment.

It is found in the host endoplasmic reticulum membrane. The protein resides in the host lysosome membrane. Functionally, plays a role in the down-regulation of the host stress-induced NKG2D ligand UBPL1, which enables immune cells expressing the NKG2D receptor to recognize and annihilate infected cells prior to viral spread. The polypeptide is Glycoprotein U20 (U20) (Human herpesvirus 6B (strain Z29) (HHV-6 variant B)).